A 239-amino-acid polypeptide reads, in one-letter code: Ribonuclease PH (239 aa).

Phosphate contacts are provided by residues Arg86 and 124–126 (GTR).

Belongs to the RNase PH family. Homohexameric ring arranged as a trimer of dimers.

The enzyme catalyses tRNA(n+1) + phosphate = tRNA(n) + a ribonucleoside 5'-diphosphate. Phosphorolytic 3'-5' exoribonuclease that plays an important role in tRNA 3'-end maturation. Removes nucleotide residues following the 3'-CCA terminus of tRNAs; can also add nucleotides to the ends of RNA molecules by using nucleoside diphosphates as substrates, but this may not be physiologically important. Probably plays a role in initiation of 16S rRNA degradation (leading to ribosome degradation) during starvation. This Psychromonas ingrahamii (strain DSM 17664 / CCUG 51855 / 37) protein is Ribonuclease PH.